The primary structure comprises 541 residues: Chaperonin GroEL (541 aa).

ATP is bound by residues 29–32 (TLGP), 86–90 (DGTTT), Gly413, 476–478 (NAA), and Asp492.

The protein belongs to the chaperonin (HSP60) family. Forms a cylinder of 14 subunits composed of two heptameric rings stacked back-to-back. Interacts with the co-chaperonin GroES.

It localises to the cytoplasm. The enzyme catalyses ATP + H2O + a folded polypeptide = ADP + phosphate + an unfolded polypeptide.. Its function is as follows. Together with its co-chaperonin GroES, plays an essential role in assisting protein folding. The GroEL-GroES system forms a nano-cage that allows encapsulation of the non-native substrate proteins and provides a physical environment optimized to promote and accelerate protein folding. The polypeptide is Chaperonin GroEL (Streptococcus equi subsp. zooepidemicus (strain MGCS10565)).